A 362-amino-acid chain; its full sequence is MTISTVIAFMSMFLVFVMSGPIVVEGRAFFVFGDSLVDSGNNNYLVTTARADSPPYGIDFPTRRPTGRFSNGLNIPDLISEAIGNEEPPLPYLSPELRGRSLLNGANFASAGIGILNDTGFQFINIIRMYQQLDYFQQYQQRVSRLIGKPQTQRLVSQALVLITVGGNDFVNNYFLFPYSARSRQFTLPDYVRLLISEYKKILLRLNSLGVGRVLVTGAGPLGCAPAELARSGTSNGRCSAELQRAASLYDPQLLQMINELNKKIGRNVFIAANTNQMQEDFLSTPRRYGFVTSKVACCGQGPYNGMGLCTVLSNLCPNRELYVFWDAFHPTEKANRMIVRHILTGTTKYMNPMNLSSALAL.

Positions 1–19 (MTISTVIAFMSMFLVFVMS) are cleaved as a signal peptide. The active-site Nucleophile is serine 35. The N-linked (GlcNAc...) asparagine glycan is linked to asparagine 117. Catalysis depends on residues aspartate 327 and histidine 330. N-linked (GlcNAc...) asparagine glycosylation occurs at asparagine 355.

Belongs to the 'GDSL' lipolytic enzyme family.

It is found in the secreted. The polypeptide is GDSL esterase/lipase At5g18430 (Arabidopsis thaliana (Mouse-ear cress)).